Reading from the N-terminus, the 217-residue chain is 3,4-dihydroxy-2-butanone 4-phosphate synthase (217 aa).

Residues 37–38 (RE), Asp42, 150–154 (RQGHT), and Glu174 each bind D-ribulose 5-phosphate. Residue Glu38 coordinates Mg(2+). His153 contacts Mg(2+).

The protein belongs to the DHBP synthase family. Homodimer. Mg(2+) is required as a cofactor. Requires Mn(2+) as cofactor.

It carries out the reaction D-ribulose 5-phosphate = (2S)-2-hydroxy-3-oxobutyl phosphate + formate + H(+). Its pathway is cofactor biosynthesis; riboflavin biosynthesis; 2-hydroxy-3-oxobutyl phosphate from D-ribulose 5-phosphate: step 1/1. Functionally, catalyzes the conversion of D-ribulose 5-phosphate to formate and 3,4-dihydroxy-2-butanone 4-phosphate. The sequence is that of 3,4-dihydroxy-2-butanone 4-phosphate synthase from Photorhabdus laumondii subsp. laumondii (strain DSM 15139 / CIP 105565 / TT01) (Photorhabdus luminescens subsp. laumondii).